A 1939-amino-acid chain; its full sequence is Myosin-1 (1939 aa).

Residues 33 to 82 form the Myosin N-terminal SH3-like domain; it reads DAKTSVFVAEPKESFVKGTVQSREGGKVTVKTEAGATLTVKEDQVFPMNP. Residues Thr64 and Thr69 each carry the phosphothreonine modification. The region spanning 86-782 is the Myosin motor domain; that stretch reads DKIEDMAMMT…LLGLLEEMRD (697 aa). Residue Lys130 is modified to N6,N6,N6-trimethyllysine. ATP is bound at residue 179–186; that stretch reads GESGAGKT. Residue Tyr389 is modified to Phosphotyrosine. Ser392 is modified (phosphoserine). A Phosphothreonine modification is found at Thr419. Phosphotyrosine is present on Tyr424. Ser625 is modified (phosphoserine). The tract at residues 659 to 681 is actin-binding; that stretch reads LNKLMTNLRSTHPHFVRCIIPNE. Pros-methylhistidine is present on His757. Residues 761–775 are actin-binding; sequence KFGHTKVFFKAGLLG. Positions 785–814 constitute an IQ domain; it reads LAQLITRTQARCRGFLARVEYQKMVERRES. A coiled-coil region spans residues 843-1939; it reads LLKSAETEKE…EVHTKIISEE (1097 aa). Ser1092 and Ser1096 each carry phosphoserine. 2 disordered regions span residues 1125–1147 and 1153–1172; these read EIEA…SREL and RLEE…KKRE. Positions 1128–1147 are enriched in basic and acidic residues; sequence AERASRAKAEKQRSDLSREL. A phosphoserine mark is found at Ser1162 and Ser1237. Thr1241 is modified (phosphothreonine). Ser1243 is subject to Phosphoserine. Position 1255 is a phosphothreonine (Thr1255). At Ser1261 the chain carries Phosphoserine. Residues Thr1265 and Thr1286 each carry the phosphothreonine modification. Ser1288, Ser1292, Ser1303, and Ser1306 each carry phosphoserine. Residue Tyr1464 is modified to Phosphotyrosine. Thr1467 bears the Phosphothreonine mark. Ser1474 carries the post-translational modification Phosphoserine. Tyr1492 carries the phosphotyrosine modification. Ser1495 bears the Phosphoserine mark. Thr1501 bears the Phosphothreonine mark. Ser1514 bears the Phosphoserine mark. Position 1517 is a phosphothreonine (Thr1517). Ser1554, Ser1574, Ser1600, Ser1603, Ser1714, and Ser1726 each carry phosphoserine. Residues Thr1730 and Thr1736 each carry the phosphothreonine modification. A Phosphoserine modification is found at Ser1739.

This sequence belongs to the TRAFAC class myosin-kinesin ATPase superfamily. Myosin family. As to quaternary structure, muscle myosin is a hexameric protein that consists of 2 heavy chain subunits (MHC), 2 alkali light chain subunits (MLC) and 2 regulatory light chain subunits (MLC-2). Interacts with SLC26A5.

The protein localises to the cytoplasm. It is found in the myofibril. Required for normal hearing. It plays a role in cochlear amplification of auditory stimuli, likely through the positive regulation of prestin (SLC26A5) activity and outer hair cell (OHC) electromotility. This chain is Myosin-1 (MYH1), found in Canis lupus familiaris (Dog).